The sequence spans 283 residues: ATP phosphoribosyltransferase (283 aa).

It belongs to the ATP phosphoribosyltransferase family. Long subfamily. The cofactor is Mg(2+).

The protein localises to the cytoplasm. It carries out the reaction 1-(5-phospho-beta-D-ribosyl)-ATP + diphosphate = 5-phospho-alpha-D-ribose 1-diphosphate + ATP. The protein operates within amino-acid biosynthesis; L-histidine biosynthesis; L-histidine from 5-phospho-alpha-D-ribose 1-diphosphate: step 1/9. With respect to regulation, feedback inhibited by histidine. In terms of biological role, catalyzes the condensation of ATP and 5-phosphoribose 1-diphosphate to form N'-(5'-phosphoribosyl)-ATP (PR-ATP). Has a crucial role in the pathway because the rate of histidine biosynthesis seems to be controlled primarily by regulation of HisG enzymatic activity. The polypeptide is ATP phosphoribosyltransferase (Ignicoccus hospitalis (strain KIN4/I / DSM 18386 / JCM 14125)).